Consider the following 418-residue polypeptide: Glutamyl-tRNA reductase (418 aa).

Residues 57–60 (TCNR), serine 113, 118–120 (DFE), and glutamine 124 contribute to the substrate site. Cysteine 58 functions as the Nucleophile in the catalytic mechanism. Residue 193–198 (GTGKIG) participates in NADP(+) binding.

Belongs to the glutamyl-tRNA reductase family. Homodimer.

It catalyses the reaction (S)-4-amino-5-oxopentanoate + tRNA(Glu) + NADP(+) = L-glutamyl-tRNA(Glu) + NADPH + H(+). The protein operates within porphyrin-containing compound metabolism; protoporphyrin-IX biosynthesis; 5-aminolevulinate from L-glutamyl-tRNA(Glu): step 1/2. In terms of biological role, catalyzes the NADPH-dependent reduction of glutamyl-tRNA(Glu) to glutamate 1-semialdehyde (GSA). This is Glutamyl-tRNA reductase from Christiangramia forsetii (strain DSM 17595 / CGMCC 1.15422 / KT0803) (Gramella forsetii).